The sequence spans 1935 residues: Rho GTPase-activating protein 21 (1935 aa).

The tract at residues 1–46 is disordered; sequence MATRRATVPEQQQQQPSSPGSEISKNKDGQEQSEMVSPTEEEGFCW. Residues 78–163 form the PDZ domain; the sequence is HTTVKDEENG…TLELSVMPKD (86 aa). Disordered regions lie at residues 212-237, 339-373, 413-456, 673-718, and 862-919; these read VEVP…TTQP, PPSY…PGSH, QNTT…QERL, TSTS…DSNS, and NSKT…DVFS. 3 stretches are compositionally biased toward polar residues: residues 217–237, 348–373, and 413–429; these read SGTS…TTQP, SMFS…PGSH, and QNTT…SSGQ. Composition is skewed to low complexity over residues 441–451 and 673–685; these read PQSVQMRQRSV and TSTS…PAHT. The span at 708 to 718 shows a compositional bias: polar residues; it reads SPEANAGDSNS. Positions 863-884 are enriched in basic and acidic residues; the sequence is SKTERSKSCDEGLDDYKDEGKL. Residues 920 to 1033 form the PH domain; it reads DSNKEGFLYF…WIKAIQENGN (114 aa). Residues 1056-1126 form a disordered region; that stretch reads TMMSSSSNKS…KGSWRRIMKK (71 aa). Residues 1059–1072 are compositionally biased toward low complexity; that stretch reads SSSSNKSEQSPKPS. Basic and acidic residues predominate over residues 1097–1119; the sequence is PKQESERRLFSKDDISPPKDKGS. In terms of domain architecture, Rho-GAP spans 1140-1332; sequence VRLDDCPPAH…TLIQQHDWFF (193 aa). 7 disordered regions span residues 1341-1393, 1411-1431, 1488-1510, 1525-1548, 1637-1665, 1688-1733, and 1838-1925; these read ITAV…GSGK, RKRK…ELDN, SEAT…RLPP, SMSD…KPKV, HRSK…SITP, SIRQ…EPEE, and SELS…SGTQ. Residues 1345–1355 are compositionally biased toward polar residues; the sequence is QEESTVESQPV. The segment covering 1376–1393 has biased composition (low complexity); sequence SDSASDSAKSKGSWGSGK. Polar residues-rich tracts occupy residues 1525–1543 and 1646–1662; these read SMSD…SAQR and RNVQ…TEGS. Residues 1691 to 1705 show a composition bias toward basic and acidic residues; the sequence is QKTDSECSAESKNEE. Composition is skewed to polar residues over residues 1872 to 1889 and 1898 to 1911; these read QVST…SQGT and NGDS…NNFS.

Its subcellular location is the golgi apparatus membrane. The protein resides in the cell junction. It is found in the cytoplasmic vesicle membrane. The protein localises to the cytoplasm. It localises to the cytoskeleton. Its function is as follows. GTPase-activating protein (GAP) for rhoa and cdc42. The protein is Rho GTPase-activating protein 21 (arhgap21) of Xenopus tropicalis (Western clawed frog).